A 577-amino-acid chain; its full sequence is Isocitrate dehydrogenase kinase/phosphatase (577 aa).

ATP is bound by residues 324 to 330 (APGIRGL) and lysine 345. The active site involves aspartate 380.

This sequence belongs to the AceK family.

The protein localises to the cytoplasm. It carries out the reaction L-seryl-[isocitrate dehydrogenase] + ATP = O-phospho-L-seryl-[isocitrate dehydrogenase] + ADP + H(+). In terms of biological role, bifunctional enzyme which can phosphorylate or dephosphorylate isocitrate dehydrogenase (IDH) on a specific serine residue. This is a regulatory mechanism which enables bacteria to bypass the Krebs cycle via the glyoxylate shunt in response to the source of carbon. When bacteria are grown on glucose, IDH is fully active and unphosphorylated, but when grown on acetate or ethanol, the activity of IDH declines drastically concomitant with its phosphorylation. In Pseudoalteromonas atlantica (strain T6c / ATCC BAA-1087), this protein is Isocitrate dehydrogenase kinase/phosphatase.